The chain runs to 388 residues: Chorismate synthase (388 aa).

R39 and R45 together coordinate NADP(+). FMN-binding positions include 130–132, 251–252, G296, 311–315, and R337; these read RSS, NA, and KPIPT.

This sequence belongs to the chorismate synthase family. In terms of assembly, homotetramer. It depends on FMNH2 as a cofactor.

It catalyses the reaction 5-O-(1-carboxyvinyl)-3-phosphoshikimate = chorismate + phosphate. It functions in the pathway metabolic intermediate biosynthesis; chorismate biosynthesis; chorismate from D-erythrose 4-phosphate and phosphoenolpyruvate: step 7/7. Catalyzes the anti-1,4-elimination of the C-3 phosphate and the C-6 proR hydrogen from 5-enolpyruvylshikimate-3-phosphate (EPSP) to yield chorismate, which is the branch point compound that serves as the starting substrate for the three terminal pathways of aromatic amino acid biosynthesis. This reaction introduces a second double bond into the aromatic ring system. This is Chorismate synthase from Streptococcus pyogenes serotype M12 (strain MGAS2096).